Here is a 185-residue protein sequence, read N- to C-terminus: Cbp/p300-interacting transactivator 4 (185 aa).

2 disordered regions span residues 15 to 64 and 95 to 130; these read PRPP…VAYG and YPGRATMPPGAPGGPSGPQPAPGAPAPPLQPPAHAL. Over residues 103-125 the composition is skewed to pro residues; sequence PGAPGGPSGPQPAPGAPAPPLQP.

This sequence belongs to the CITED family. Interacts via its C-terminal region with the CH1 domain of CREBBP and EP300. Interacts with all TFAP2/AP-2 isoforms.

It localises to the nucleus. The protein localises to the cytoplasm. In terms of biological role, acts as a transcriptional coactivator for TFAP2/AP-2. Enhances estrogen-dependent transactivation mediated by estrogen receptors. May function as an inhibitor of transactivation by HIF1A by disrupting HIF1A interaction with CREBBP. May be involved in regulation of gene expression during development and differentiation of blood cells, endothelial cells and mammary epithelial cells. The chain is Cbp/p300-interacting transactivator 4 (CITED4) from Bos taurus (Bovine).